A 537-amino-acid chain; its full sequence is CTP synthase (537 aa).

The segment at 1 to 267 is amidoligase domain; it reads MTKYIFVTGG…DQIVCDHLKL (267 aa). Position 13 (serine 13) interacts with CTP. Serine 13 contacts UTP. An ATP-binding site is contributed by 14–19; sequence SIGKGI. Tyrosine 54 serves as a coordination point for L-glutamine. Aspartate 71 contributes to the ATP binding site. Positions 71 and 141 each coordinate Mg(2+). Residues 148–150, 188–193, and lysine 224 each bind CTP; these read DIE and KTKPTQ. UTP is bound by residues 188 to 193 and lysine 224; that span reads KTKPTQ. 240–242 contributes to the ATP binding site; the sequence is RDV. Positions 292–535 constitute a Glutamine amidotransferase type-1 domain; sequence RIALVGKYVE…VTAAVKNKNQ (244 aa). Glycine 354 provides a ligand contact to L-glutamine. Cysteine 381 (nucleophile; for glutamine hydrolysis) is an active-site residue. L-glutamine contacts are provided by residues 382 to 385, glutamate 405, and arginine 463; that span reads LGMQ. Catalysis depends on residues histidine 508 and glutamate 510.

The protein belongs to the CTP synthase family. Homotetramer.

It catalyses the reaction UTP + L-glutamine + ATP + H2O = CTP + L-glutamate + ADP + phosphate + 2 H(+). The enzyme catalyses L-glutamine + H2O = L-glutamate + NH4(+). The catalysed reaction is UTP + NH4(+) + ATP = CTP + ADP + phosphate + 2 H(+). It functions in the pathway pyrimidine metabolism; CTP biosynthesis via de novo pathway; CTP from UDP: step 2/2. With respect to regulation, allosterically activated by GTP, when glutamine is the substrate; GTP has no effect on the reaction when ammonia is the substrate. The allosteric effector GTP functions by stabilizing the protein conformation that binds the tetrahedral intermediate(s) formed during glutamine hydrolysis. Inhibited by the product CTP, via allosteric rather than competitive inhibition. In terms of biological role, catalyzes the ATP-dependent amination of UTP to CTP with either L-glutamine or ammonia as the source of nitrogen. Regulates intracellular CTP levels through interactions with the four ribonucleotide triphosphates. This chain is CTP synthase, found in Streptococcus equi subsp. zooepidemicus (strain H70).